The sequence spans 471 residues: Mannose-1-phosphate guanylyltransferase (471 aa).

The protein belongs to the mannose-6-phosphate isomerase type 2 family.

It carries out the reaction alpha-D-mannose 1-phosphate + GTP + H(+) = GDP-alpha-D-mannose + diphosphate. It participates in nucleotide-sugar biosynthesis; GDP-alpha-D-mannose biosynthesis; GDP-alpha-D-mannose from alpha-D-mannose 1-phosphate (GTP route): step 1/1. Its pathway is bacterial outer membrane biogenesis; LPS O-antigen biosynthesis. In terms of biological role, involved in GDP-mannose biosynthesis which serves as the activated sugar nucleotide precursor for mannose residues in cell surface polysaccharides. This enzyme participates in synthesis of the LPS O9 antigen. The polypeptide is Mannose-1-phosphate guanylyltransferase (manC) (Escherichia coli).